The following is a 497-amino-acid chain: COP9 signalosome complex subunit 6 (497 aa).

The 142-residue stretch at 21 to 162 (VALHPLPILE…LTIYESNLEI (142 aa)) folds into the MPN domain. Disordered stretches follow at residues 230–282 (ATED…KNRD), 324–350 (YLSS…LDQP), and 435–497 (AKNS…RFDH). Over residues 236–246 (SDKPLMKKVVD) the composition is skewed to basic and acidic residues. Composition is skewed to low complexity over residues 258 to 272 (SDDA…SSAA) and 333 to 343 (QQQQQQQQQQQ). Positions 440–453 (RREQASHGGGERFN) are enriched in basic and acidic residues. Over residues 475–488 (VGEGSASGSGGSGP) the composition is skewed to gly residues.

The protein belongs to the peptidase M67A family. CSN6 subfamily. In terms of assembly, component of the COP9 signalosome (CSN) complex.

Its subcellular location is the cytoplasm. It is found in the nucleus. Its function is as follows. Component of the COP9 signalosome (CSN) complex that acts as an regulator of the ubiquitin (Ubl) conjugation pathway by mediating the deneddylation of the cullin subunit of SCF-type E3 ubiquitin-protein ligase complexes. The CSN complex is involved in the regulation of the circadian clock through its control of the stability of the SCF(FWD1) complex. This chain is COP9 signalosome complex subunit 6 (csn-6), found in Neurospora crassa (strain ATCC 24698 / 74-OR23-1A / CBS 708.71 / DSM 1257 / FGSC 987).